The primary structure comprises 465 residues: Phenylalanine--tRNA ligase alpha subunit (465 aa).

Positions 311 and 389 each coordinate L-phenylalanine. A Mg(2+)-binding site is contributed by Glu-391.

The protein belongs to the class-II aminoacyl-tRNA synthetase family. Phe-tRNA synthetase alpha subunit type 2 subfamily. As to quaternary structure, tetramer of two alpha and two beta subunits. Requires Mg(2+) as cofactor.

It localises to the cytoplasm. It catalyses the reaction tRNA(Phe) + L-phenylalanine + ATP = L-phenylalanyl-tRNA(Phe) + AMP + diphosphate + H(+). The polypeptide is Phenylalanine--tRNA ligase alpha subunit (Metallosphaera sedula (strain ATCC 51363 / DSM 5348 / JCM 9185 / NBRC 15509 / TH2)).